The primary structure comprises 231 residues: MYFPIEKPDVWGIFKKRLNRFVGLAEIDGVETLVHIHDPGRLQELLFPGAMIWARRKQRGKTQYYLTAVELDDELVLIDPAAHNKVTSWLIEAGFLLRGYAIERYEPAFGKGRFDLLLRGPNGQRALVEVKGVTLEAGGRALFPDAPTSRGARHMEELAKAVTEGFEAHVIFLVFRKRAKVFSPNWEMDRKFAEALVRAYRSGVYIHAVKLEMFKWGLRYIEELPIDLLAL.

This sequence belongs to the SfsA family.

The protein is Sugar fermentation stimulation protein homolog of Pyrobaculum islandicum (strain DSM 4184 / JCM 9189 / GEO3).